Reading from the N-terminus, the 224-residue chain is Large ribosomal subunit protein uL3 (224 aa).

The disordered stretch occupies residues 132 to 153 (SQTKTHGTHEYQRHPGAIGQRK).

Belongs to the universal ribosomal protein uL3 family. Part of the 50S ribosomal subunit. Forms a cluster with proteins L14 and L19.

Functionally, one of the primary rRNA binding proteins, it binds directly near the 3'-end of the 23S rRNA, where it nucleates assembly of the 50S subunit. In Myxococcus xanthus (strain DK1622), this protein is Large ribosomal subunit protein uL3.